The chain runs to 247 residues: 2,3-bisphosphoglycerate-dependent phosphoglycerate mutase (247 aa).

Residues 8 to 15 (RHGESTWN), 21 to 22 (TG), R60, 87 to 90 (ERHY), K98, 114 to 115 (RR), and 183 to 184 (GN) each bind substrate. H9 (tele-phosphohistidine intermediate) is an active-site residue. E87 acts as the Proton donor/acceptor in catalysis.

The protein belongs to the phosphoglycerate mutase family. BPG-dependent PGAM subfamily. As to quaternary structure, homodimer.

It carries out the reaction (2R)-2-phosphoglycerate = (2R)-3-phosphoglycerate. The protein operates within carbohydrate degradation; glycolysis; pyruvate from D-glyceraldehyde 3-phosphate: step 3/5. Functionally, catalyzes the interconversion of 2-phosphoglycerate and 3-phosphoglycerate. This is 2,3-bisphosphoglycerate-dependent phosphoglycerate mutase from Acidovorax sp. (strain JS42).